Reading from the N-terminus, the 413-residue chain is GDP-mannose-dependent alpha-mannosyltransferase (413 aa).

The protein belongs to the glycosyltransferase group 1 family.

Its pathway is phospholipid metabolism; phosphatidylinositol metabolism. Catalyzes the addition of a mannose residue from GDP-D-mannose to GlcAGroAc2 to generate 1,2-di-O-C16/C18:1-(alpha-D-mannopyranosyl)-(1-4)-(alpha-D-glucopyranosyluronic acid)-(1-3)-glycerol(ManGlcAGroAc2). This chain is GDP-mannose-dependent alpha-mannosyltransferase (mgtA), found in Corynebacterium glutamicum (strain ATCC 13032 / DSM 20300 / JCM 1318 / BCRC 11384 / CCUG 27702 / LMG 3730 / NBRC 12168 / NCIMB 10025 / NRRL B-2784 / 534).